The chain runs to 470 residues: Trigger factor (470 aa).

The PPIase FKBP-type domain occupies 164 to 243 (GDYVVIDMTA…VTAVKVQELP (80 aa)). 2 stretches are compositionally biased toward acidic residues: residues 424–438 (ETDA…ESVE) and 445–470 (AEDD…AAKA). The tract at residues 424–470 (ETDAEDAAEGVESVEVDLSAAAEDDAEETSDEPAAEDTATEDEAAKA) is disordered.

Belongs to the FKBP-type PPIase family. Tig subfamily.

It localises to the cytoplasm. It carries out the reaction [protein]-peptidylproline (omega=180) = [protein]-peptidylproline (omega=0). Its function is as follows. Involved in protein export. Acts as a chaperone by maintaining the newly synthesized protein in an open conformation. Functions as a peptidyl-prolyl cis-trans isomerase. In Beutenbergia cavernae (strain ATCC BAA-8 / DSM 12333 / CCUG 43141 / JCM 11478 / NBRC 16432 / NCIMB 13614 / HKI 0122), this protein is Trigger factor.